Reading from the N-terminus, the 316-residue chain is Coproporphyrin III ferrochelatase (316 aa).

Residues Tyr13, Arg30, 46–47 (RY), Ser54, and Tyr125 contribute to the Fe-coproporphyrin III site. Fe(2+) is bound by residues His183 and Glu264.

Belongs to the ferrochelatase family.

It is found in the cytoplasm. It catalyses the reaction Fe-coproporphyrin III + 2 H(+) = coproporphyrin III + Fe(2+). It functions in the pathway porphyrin-containing compound metabolism; protoheme biosynthesis. Its function is as follows. Involved in coproporphyrin-dependent heme b biosynthesis. Catalyzes the insertion of ferrous iron into coproporphyrin III to form Fe-coproporphyrin III. In Geobacillus kaustophilus (strain HTA426), this protein is Coproporphyrin III ferrochelatase.